A 367-amino-acid polypeptide reads, in one-letter code: Indole glucosinolate O-methyltransferase 5 (367 aa).

The S-adenosyl-L-homocysteine site is built by glycine 209, aspartate 232, aspartate 252, methionine 253, and lysine 266. Histidine 270 (proton acceptor) is an active-site residue.

Belongs to the class I-like SAM-binding methyltransferase superfamily. Cation-independent O-methyltransferase family.

It participates in secondary metabolite biosynthesis. Involved in indole glucosinolate biosynthesis. Catalyzes methoxylation reactions of the glucosinolate indole ring. Converts the hydroxy intermediates 4-hydroxy-indol-3-yl-methylglucosinolate (4OH-I3M) and 1-hydroxy-indol-3-yl-methylglucosinolate (1OH-I3M) to 4-methoxy-indol-3-yl-methylglucosinolate (4MO-I3M) and 1-methoxy-indol-3-yl-methylglucosinolate, respectively. The chain is Indole glucosinolate O-methyltransferase 5 from Arabidopsis thaliana (Mouse-ear cress).